A 475-amino-acid polypeptide reads, in one-letter code: MVPQTETKAGAGFKAGVKDYRLTYYTPDYVVKDTDILAAFRMTPQPGVPAEECGAAVAAESSTGTWTTVWTDGLTSLDRYKGRCYDIEPVPGEDNQYIAYVAYPIDLFEEGSVTNLFTSIVGNVFGFKALRALRLEDLRIPPAYVKTFSGPPHGIQVERDKINKYGRGLLGCTIKPKLGLSAKNYGRAVYECLRGGLDFTKDDENVNSQPFMRWRDRFLFCAEAIYKAQAETGEVKGHYLNATAGTSEEMIKRAVCAKEFGVPIIMHDYLTGGFTANTSLSNYCRDHGLLLHIHRAMHAVIDRQRNHGIHFRVLAKALRMSGGDHLHSGTVVGKLEGEREVTLGFVDLMRDNYIEKDRSRGIYFTQDWCSMAGVMPVASGGIHVWHMPALVEIFGDDACLQFGGGTLGHPWGNAPGAVANRVALEACTQARNEGRDLAREGGDVIRSACKWSPELAAACEVWKEIKVEFDTIDKL.

Positions 1-2 (MV) are excised as a propeptide. The residue at position 3 (proline 3) is an N-acetylproline. Lysine 14 is modified (N6,N6,N6-trimethyllysine). Substrate is bound by residues asparagine 123 and threonine 173. Lysine 175 functions as the Proton acceptor in the catalytic mechanism. Lysine 177 is a substrate binding site. The Mg(2+) site is built by lysine 201, aspartate 203, and glutamate 204. At lysine 201 the chain carries N6-carboxylysine. Residue histidine 294 is the Proton acceptor of the active site. Substrate is bound by residues arginine 295, histidine 327, and serine 379.

Belongs to the RuBisCO large chain family. Type I subfamily. Heterohexadecamer of 8 large chains and 8 small chains. It depends on Mg(2+) as a cofactor.

Its subcellular location is the plastid. It localises to the chloroplast. The catalysed reaction is 2 (2R)-3-phosphoglycerate + 2 H(+) = D-ribulose 1,5-bisphosphate + CO2 + H2O. The enzyme catalyses D-ribulose 1,5-bisphosphate + O2 = 2-phosphoglycolate + (2R)-3-phosphoglycerate + 2 H(+). Its function is as follows. RuBisCO catalyzes two reactions: the carboxylation of D-ribulose 1,5-bisphosphate, the primary event in carbon dioxide fixation, as well as the oxidative fragmentation of the pentose substrate in the photorespiration process. Both reactions occur simultaneously and in competition at the same active site. The polypeptide is Ribulose bisphosphate carboxylase large chain (Chlamydomonas moewusii (Chlamydomonas eugametos)).